Here is a 260-residue protein sequence, read N- to C-terminus: Phosphatidate cytidylyltransferase (260 aa).

The next 7 membrane-spanning stretches (helical) occupy residues 9–29 (IIAL…LMLF), 46–66 (MIKF…IIML), 70–90 (AGSW…FILL), 102–122 (FMDA…FMYL), 130–150 (LHYI…AYIF), 172–192 (FVGG…FVDF), and 196–216 (LWLL…GDLV).

The protein belongs to the CDS family.

Its subcellular location is the cell membrane. The catalysed reaction is a 1,2-diacyl-sn-glycero-3-phosphate + CTP + H(+) = a CDP-1,2-diacyl-sn-glycerol + diphosphate. It participates in phospholipid metabolism; CDP-diacylglycerol biosynthesis; CDP-diacylglycerol from sn-glycerol 3-phosphate: step 3/3. The polypeptide is Phosphatidate cytidylyltransferase (cdsA) (Staphylococcus saprophyticus subsp. saprophyticus (strain ATCC 15305 / DSM 20229 / NCIMB 8711 / NCTC 7292 / S-41)).